The primary structure comprises 325 residues: Biotin synthase (325 aa).

A Radical SAM core domain is found at 49-279 (VGDKVELCSI…DKNIRYAGGR (231 aa)). Residues Cys66, Cys70, and Cys73 each coordinate [4Fe-4S] cluster. 3 residues coordinate [2Fe-2S] cluster: Cys144, Cys204, and Arg274.

This sequence belongs to the radical SAM superfamily. Biotin synthase family. In terms of assembly, homodimer. The cofactor is [4Fe-4S] cluster. [2Fe-2S] cluster is required as a cofactor.

The enzyme catalyses (4R,5S)-dethiobiotin + (sulfur carrier)-SH + 2 reduced [2Fe-2S]-[ferredoxin] + 2 S-adenosyl-L-methionine = (sulfur carrier)-H + biotin + 2 5'-deoxyadenosine + 2 L-methionine + 2 oxidized [2Fe-2S]-[ferredoxin]. It functions in the pathway cofactor biosynthesis; biotin biosynthesis; biotin from 7,8-diaminononanoate: step 2/2. Its function is as follows. Catalyzes the conversion of dethiobiotin (DTB) to biotin by the insertion of a sulfur atom into dethiobiotin via a radical-based mechanism. This is Biotin synthase from Carboxydothermus hydrogenoformans (strain ATCC BAA-161 / DSM 6008 / Z-2901).